A 194-amino-acid polypeptide reads, in one-letter code: ATP synthase subunit delta (194 aa).

This sequence belongs to the ATPase delta chain family. F-type ATPases have 2 components, F(1) - the catalytic core - and F(0) - the membrane proton channel. F(1) has five subunits: alpha(3), beta(3), gamma(1), delta(1), epsilon(1). F(0) has three main subunits: a(1), b(2) and c(10-14). The alpha and beta chains form an alternating ring which encloses part of the gamma chain. F(1) is attached to F(0) by a central stalk formed by the gamma and epsilon chains, while a peripheral stalk is formed by the delta and b chains.

The protein localises to the cell inner membrane. Its function is as follows. F(1)F(0) ATP synthase produces ATP from ADP in the presence of a proton or sodium gradient. F-type ATPases consist of two structural domains, F(1) containing the extramembraneous catalytic core and F(0) containing the membrane proton channel, linked together by a central stalk and a peripheral stalk. During catalysis, ATP synthesis in the catalytic domain of F(1) is coupled via a rotary mechanism of the central stalk subunits to proton translocation. Functionally, this protein is part of the stalk that links CF(0) to CF(1). It either transmits conformational changes from CF(0) to CF(1) or is implicated in proton conduction. This is ATP synthase subunit delta from Bartonella bacilliformis (strain ATCC 35685 / KC583 / Herrer 020/F12,63).